We begin with the raw amino-acid sequence, 260 residues long: MVSFYDREFSSRLLIGTALYPSPKIMQDAIRAAGSQIVTVSLRRETAGGKTGDAFWSLIRELDVTVLPNTAGCKTVREAVTTAKLARELFGTSWIKLEVIADNDTLQPDVVGLVEAAAILIRDGFDVFPYCTEDLGVAMRLVEAGCKVVMPWAAPIGSAKGITNRDALKLLRERLPDVTLVVDAGLGAPSHAAQACELGYDAVLLNTAVAKAADPVVMAGAFRLAVEAGRNAYEAGLMEARDFASPSTPVVGTPFWHAVS.

The Schiff-base intermediate with DXP role is filled by Lys-96. 1-deoxy-D-xylulose 5-phosphate-binding positions include Gly-157, 184–185 (AG), and 206–207 (NT).

Belongs to the ThiG family. Homotetramer. Forms heterodimers with either ThiH or ThiS.

It localises to the cytoplasm. It catalyses the reaction [ThiS sulfur-carrier protein]-C-terminal-Gly-aminoethanethioate + 2-iminoacetate + 1-deoxy-D-xylulose 5-phosphate = [ThiS sulfur-carrier protein]-C-terminal Gly-Gly + 2-[(2R,5Z)-2-carboxy-4-methylthiazol-5(2H)-ylidene]ethyl phosphate + 2 H2O + H(+). It functions in the pathway cofactor biosynthesis; thiamine diphosphate biosynthesis. In terms of biological role, catalyzes the rearrangement of 1-deoxy-D-xylulose 5-phosphate (DXP) to produce the thiazole phosphate moiety of thiamine. Sulfur is provided by the thiocarboxylate moiety of the carrier protein ThiS. In vitro, sulfur can be provided by H(2)S. In Nitrobacter winogradskyi (strain ATCC 25391 / DSM 10237 / CIP 104748 / NCIMB 11846 / Nb-255), this protein is Thiazole synthase.